Here is a 295-residue protein sequence, read N- to C-terminus: Nucleotide-binding protein SSU98_0619 (295 aa).

An ATP-binding site is contributed by 12–19; that stretch reads GMSGAGKT. Residue 62-65 participates in GTP binding; it reads DMRS.

Belongs to the RapZ-like family.

Functionally, displays ATPase and GTPase activities. The chain is Nucleotide-binding protein SSU98_0619 from Streptococcus suis (strain 98HAH33).